The following is a 357-amino-acid chain: 3-isopropylmalate dehydrogenase (357 aa).

76-89 (GYQWESLDISVRPE) is an NAD(+) binding site. 4 residues coordinate substrate: R96, R106, R134, and D224. Mg(2+)-binding residues include D224, D248, and D252. 282–294 (GSAPDIAGQNIAN) provides a ligand contact to NAD(+).

It belongs to the isocitrate and isopropylmalate dehydrogenases family. LeuB type 1 subfamily. Homodimer. Requires Mg(2+) as cofactor. Mn(2+) serves as cofactor.

It localises to the cytoplasm. It carries out the reaction (2R,3S)-3-isopropylmalate + NAD(+) = 4-methyl-2-oxopentanoate + CO2 + NADH. It functions in the pathway amino-acid biosynthesis; L-leucine biosynthesis; L-leucine from 3-methyl-2-oxobutanoate: step 3/4. Catalyzes the oxidation of 3-carboxy-2-hydroxy-4-methylpentanoate (3-isopropylmalate) to 3-carboxy-4-methyl-2-oxopentanoate. The product decarboxylates to 4-methyl-2 oxopentanoate. The chain is 3-isopropylmalate dehydrogenase from Hydrogenovibrio crunogenus (strain DSM 25203 / XCL-2) (Thiomicrospira crunogena).